Consider the following 202-residue polypeptide: NADH-quinone oxidoreductase subunit C (202 aa).

It belongs to the complex I 30 kDa subunit family. As to quaternary structure, NDH-1 is composed of 14 different subunits. Subunits NuoB, C, D, E, F, and G constitute the peripheral sector of the complex.

It localises to the cell inner membrane. The enzyme catalyses a quinone + NADH + 5 H(+)(in) = a quinol + NAD(+) + 4 H(+)(out). Its function is as follows. NDH-1 shuttles electrons from NADH, via FMN and iron-sulfur (Fe-S) centers, to quinones in the respiratory chain. The immediate electron acceptor for the enzyme in this species is believed to be ubiquinone. Couples the redox reaction to proton translocation (for every two electrons transferred, four hydrogen ions are translocated across the cytoplasmic membrane), and thus conserves the redox energy in a proton gradient. The protein is NADH-quinone oxidoreductase subunit C of Bartonella henselae (strain ATCC 49882 / DSM 28221 / CCUG 30454 / Houston 1) (Rochalimaea henselae).